The following is a 324-amino-acid chain: Acetyl-coenzyme A carboxylase carboxyl transferase subunit beta (324 aa).

Positions 28-297 (LWCKCPSCNA…AVAPAAAKAP (270 aa)) constitute a CoA carboxyltransferase N-terminal domain. The Zn(2+) site is built by cysteine 32, cysteine 35, cysteine 51, and cysteine 54. The C4-type zinc-finger motif lies at 32-54 (CPSCNAILYKSEVERNLEVCPKC).

Belongs to the AccD/PCCB family. As to quaternary structure, acetyl-CoA carboxylase is a heterohexamer composed of biotin carboxyl carrier protein (AccB), biotin carboxylase (AccC) and two subunits each of ACCase subunit alpha (AccA) and ACCase subunit beta (AccD). It depends on Zn(2+) as a cofactor.

It localises to the cytoplasm. It catalyses the reaction N(6)-carboxybiotinyl-L-lysyl-[protein] + acetyl-CoA = N(6)-biotinyl-L-lysyl-[protein] + malonyl-CoA. It functions in the pathway lipid metabolism; malonyl-CoA biosynthesis; malonyl-CoA from acetyl-CoA: step 1/1. Component of the acetyl coenzyme A carboxylase (ACC) complex. Biotin carboxylase (BC) catalyzes the carboxylation of biotin on its carrier protein (BCCP) and then the CO(2) group is transferred by the transcarboxylase to acetyl-CoA to form malonyl-CoA. This Methylococcus capsulatus (strain ATCC 33009 / NCIMB 11132 / Bath) protein is Acetyl-coenzyme A carboxylase carboxyl transferase subunit beta.